A 112-amino-acid polypeptide reads, in one-letter code: Nitrogen regulatory protein GlnK (112 aa).

ADP is bound at residue Thr29. Gly37 is a binding site for ATP. Residue 38–39 (RQ) participates in ADP binding. Tyr51 is subject to O-UMP-tyrosine. ADP-binding positions include Ala64, 87–90 (GDGK), and 101–103 (RIR). Residues Ala64, 87-90 (GDGK), and 101-103 (RIR) each bind ATP.

This sequence belongs to the P(II) protein family. In terms of assembly, homotrimer. In response to elevation of the extracellular ammonium concentration, interacts and forms a complex with AmtB. Post-translationally, uridylylated/deuridylylated by GlnD. Fully uridylylated in nitrogen-limited conditions and deuridylylated when extracellular ammonium increases.

Its subcellular location is the cytoplasm. It localises to the cell inner membrane. Its activity is regulated as follows. Formation of the GlnK-AmtB complex is influenced by intracellular pools of the effector molecules ATP, ADP, Mg(2+) and 2-oxoglutarate. The GlnK-AmtB interaction is also controlled by the level of intracellular glutamine and the uridylylation status of GlnK. Involved in the regulation of nitrogen metabolism. Regulates the activity of its targets by protein-protein interaction in response to the nitrogen status of the cell. Involved in the regulation of the ammonium transporter AmtB so as to optimize ammonium uptake under all growth conditions. In nitrogen-limited conditions, GlnK does not interact with AmtB, which remains active and imports ammonium. When extracellular ammonium increases, GlnK associates tightly with AmtB in the inner membrane, thereby inhibiting the transporter activity. The chain is Nitrogen regulatory protein GlnK (glnK) from Escherichia coli O157:H7.